We begin with the raw amino-acid sequence, 116 residues long: T cell receptor alpha variable 14/delta variable 4 (116 aa).

The N-terminal stretch at 1-21 (MSLSSLLKVVTASLWLGPGIA) is a signal peptide. The region spanning 22–116 (QKITQTQPGM…SAMYFCAMRE (95 aa)) is the Ig-like domain. Cys-43 and Cys-112 are oxidised to a cystine. A glycan (N-linked (GlcNAc...) asparagine) is linked at Asn-78.

As to quaternary structure, alpha-beta TR is a heterodimer composed of an alpha and beta chain; disulfide-linked. The alpha-beta TR is associated with the transmembrane signaling CD3 coreceptor proteins to form the TR-CD3 (TcR or TCR). The assembly of alpha-beta TR heterodimers with CD3 occurs in the endoplasmic reticulum where a single alpha-beta TR heterodimer associates with one CD3D-CD3E heterodimer, one CD3G-CD3E heterodimer and one CD247 homodimer forming a stable octameric structure. CD3D-CD3E and CD3G-CD3E heterodimers preferentially associate with TR alpha and TR beta chains, respectively. The association of the CD247 homodimer is the last step of TcR assembly in the endoplasmic reticulum and is required for transport to the cell surface.

The protein resides in the cell membrane. V region of the variable domain of T cell receptor (TR) alpha chain that participates in the antigen recognition. Alpha-beta T cell receptors are antigen specific receptors which are essential to the immune response and are present on the cell surface of T lymphocytes. Recognize peptide-major histocompatibility (MH) (pMH) complexes that are displayed by antigen presenting cells (APC), a prerequisite for efficient T cell adaptive immunity against pathogens. Binding of alpha-beta TR to pMH complex initiates TR-CD3 clustering on the cell surface and intracellular activation of LCK that phosphorylates the ITAM motifs of CD3G, CD3D, CD3E and CD247 enabling the recruitment of ZAP70. In turn ZAP70 phosphorylates LAT, which recruits numerous signaling molecules to form the LAT signalosome. The LAT signalosome propagates signal branching to three major signaling pathways, the calcium, the mitogen-activated protein kinase (MAPK) kinase and the nuclear factor NF-kappa-B (NF-kB) pathways, leading to the mobilization of transcription factors that are critical for gene expression and essential for T cell growth and differentiation. The T cell repertoire is generated in the thymus, by V-(D)-J rearrangement. This repertoire is then shaped by intrathymic selection events to generate a peripheral T cell pool of self-MH restricted, non-autoaggressive T cells. Post-thymic interaction of alpha-beta TR with the pMH complexes shapes TR structural and functional avidity. The sequence is that of T cell receptor alpha variable 14/delta variable 4 from Homo sapiens (Human).